A 293-amino-acid polypeptide reads, in one-letter code: Small ribosomal subunit biogenesis GTPase RsgA (293 aa).

Positions 63–223 (KNELVRPPIA…VADTPGFSSL (161 aa)) constitute a CP-type G domain. GTP-binding positions include 112–115 (SKMD) and 166–174 (GQSGVGKSS). Zn(2+) contacts are provided by cysteine 247, cysteine 252, histidine 254, and cysteine 260.

The protein belongs to the TRAFAC class YlqF/YawG GTPase family. RsgA subfamily. Monomer. Associates with 30S ribosomal subunit, binds 16S rRNA. The cofactor is Zn(2+).

Its subcellular location is the cytoplasm. In terms of biological role, one of several proteins that assist in the late maturation steps of the functional core of the 30S ribosomal subunit. Helps release RbfA from mature subunits. May play a role in the assembly of ribosomal proteins into the subunit. Circularly permuted GTPase that catalyzes slow GTP hydrolysis, GTPase activity is stimulated by the 30S ribosomal subunit. The polypeptide is Small ribosomal subunit biogenesis GTPase RsgA (Bacillus cereus (strain ATCC 14579 / DSM 31 / CCUG 7414 / JCM 2152 / NBRC 15305 / NCIMB 9373 / NCTC 2599 / NRRL B-3711)).